The sequence spans 255 residues: tRNA (guanine-N(7)-)-methyltransferase (255 aa).

Residues 1-21 form a disordered region; the sequence is MMHDDPNEAGLPPHDDAIPDE. S-adenosyl-L-methionine is bound by residues Glu86, Glu111, Asp138, and Asp161. Asp161 is a catalytic residue. Substrate is bound by residues Lys165, Asp197, and 232 to 235; that span reads TKFE.

Belongs to the class I-like SAM-binding methyltransferase superfamily. TrmB family.

The enzyme catalyses guanosine(46) in tRNA + S-adenosyl-L-methionine = N(7)-methylguanosine(46) in tRNA + S-adenosyl-L-homocysteine. The protein operates within tRNA modification; N(7)-methylguanine-tRNA biosynthesis. Catalyzes the formation of N(7)-methylguanine at position 46 (m7G46) in tRNA. This chain is tRNA (guanine-N(7)-)-methyltransferase, found in Burkholderia lata (strain ATCC 17760 / DSM 23089 / LMG 22485 / NCIMB 9086 / R18194 / 383).